The chain runs to 77 residues: Translation initiation factor IF-1, chloroplastic (77 aa).

Positions 1–71 constitute an S1-like domain; sequence MKEQKLIHEG…TRGRIIYRLR (71 aa).

This sequence belongs to the IF-1 family. As to quaternary structure, component of the 30S ribosomal translation pre-initiation complex which assembles on the 30S ribosome in the order IF-2 and IF-3, IF-1 and N-formylmethionyl-tRNA(fMet); mRNA recruitment can occur at any time during PIC assembly.

The protein resides in the plastid. Its subcellular location is the chloroplast. In terms of biological role, one of the essential components for the initiation of protein synthesis. Stabilizes the binding of IF-2 and IF-3 on the 30S subunit to which N-formylmethionyl-tRNA(fMet) subsequently binds. Helps modulate mRNA selection, yielding the 30S pre-initiation complex (PIC). Upon addition of the 50S ribosomal subunit IF-1, IF-2 and IF-3 are released leaving the mature 70S translation initiation complex. The protein is Translation initiation factor IF-1, chloroplastic of Cabomba caroliniana (Carolina fanwort).